The following is a 38-amino-acid chain: Alpha-conotoxin LvIC (38 aa).

Positions 1–21 are excised as a propeptide; it reads SNGRNAAAGDKPSYWITLAIT. Cystine bridges form between cysteine 23/cysteine 29 and cysteine 24/cysteine 34. Glutamine 35 is modified (glutamine amide).

The protein belongs to the conotoxin A superfamily. The two analogs ([DelQ14]LvIC and [D1G,DelQ14]LvIC) are amidated at their N-terminal Cys. Expressed by the venom gland.

Its subcellular location is the secreted. In terms of biological role, alpha-conotoxins bind to the nicotinic acetylcholine receptors (nAChR) and inhibit them. This synthetic peptide inhibits rat alpha-6/alpha-3-beta-4 nAChR (IC(50)=3.3 uM). In Conus lividus (Livid cone), this protein is Alpha-conotoxin LvIC.